The sequence spans 112 residues: Nucleoid-associated protein lpg2755 (112 aa).

Belongs to the YbaB/EbfC family. As to quaternary structure, homodimer.

The protein resides in the cytoplasm. It is found in the nucleoid. Binds to DNA and alters its conformation. May be involved in regulation of gene expression, nucleoid organization and DNA protection. This chain is Nucleoid-associated protein lpg2755, found in Legionella pneumophila subsp. pneumophila (strain Philadelphia 1 / ATCC 33152 / DSM 7513).